A 218-amino-acid chain; its full sequence is Protein GrpE (218 aa).

The tract at residues 1-78 is disordered; that stretch reads MSEFNKDDYL…DSADTLTPLG (78 aa). Positions 14-58 are enriched in low complexity; it reads PDPSDAEAAAQASSGADASAESGSAQDSAAQAPSNEGADAAPAAA.

The protein belongs to the GrpE family. As to quaternary structure, homodimer.

It localises to the cytoplasm. In terms of biological role, participates actively in the response to hyperosmotic and heat shock by preventing the aggregation of stress-denatured proteins, in association with DnaK and GrpE. It is the nucleotide exchange factor for DnaK and may function as a thermosensor. Unfolded proteins bind initially to DnaJ; upon interaction with the DnaJ-bound protein, DnaK hydrolyzes its bound ATP, resulting in the formation of a stable complex. GrpE releases ADP from DnaK; ATP binding to DnaK triggers the release of the substrate protein, thus completing the reaction cycle. Several rounds of ATP-dependent interactions between DnaJ, DnaK and GrpE are required for fully efficient folding. This chain is Protein GrpE, found in Bifidobacterium longum (strain NCC 2705).